The sequence spans 178 residues: Ribosome maturation factor RimP (178 aa).

It belongs to the RimP family.

It is found in the cytoplasm. In terms of biological role, required for maturation of 30S ribosomal subunits. The polypeptide is Ribosome maturation factor RimP (Streptococcus pyogenes serotype M18 (strain MGAS8232)).